A 259-amino-acid chain; its full sequence is Polycomb group RING finger protein 1 (259 aa).

An N-acetylalanine modification is found at A2. S3 is modified (phosphoserine). K24 is covalently cross-linked (Glycyl lysine isopeptide (Lys-Gly) (interchain with G-Cter in SUMO2)). The RING-type zinc finger occupies C47–N86. The segment at N86 to P247 is required for repressor activity. K88 is covalently cross-linked (Glycyl lysine isopeptide (Lys-Gly) (interchain with G-Cter in SUMO2)). Positions L150 to K255 are required for the interaction with the KDM2B-SKP1 heterodimeric complex. Residues E167–K255 form an RING-finger and WD40-associated ubiquitin-like domain (RAWUL); sufficient for interaction with BCOR and BCORL1 region.

Interacts with BCORL1, forming heterodimers. The PCGF1-BCORL1 heterodimeric complex interacts with the KDM2B-SKP1 heterodimeric complex to form a homotetrameric polycomb repression complex 1 (PRC1.1). Component of the repressive BCOR complex containing a Polycomb group subcomplex at least composed of RYBP, RING1 and RNF2/RING2. Specifically interacts with BCOR, RING1 and RNF2/RING2. Component of a PRC1-like complex. Interacts with CBX6, CBX7 and CBX8. Interacts with DPPA4, NANOG, POU5F1 and RYBP. In terms of tissue distribution, ubiquitous.

It localises to the nucleus. Functionally, component of the Polycomb group (PcG) multiprotein BCOR complex, a complex required to maintain the transcriptionally repressive state of some genes, such as BCL6 and the cyclin-dependent kinase inhibitor, CDKN1A. Transcriptional repressor that may be targeted to the DNA by BCL6; this transcription repressor activity may be related to PKC signaling pathway. Represses CDKN1A expression by binding to its promoter, and this repression is dependent on the retinoic acid response element (RARE element). Promotes cell cycle progression and enhances cell proliferation as well. May have a positive role in tumor cell growth by down-regulating CDKN1A. Component of a Polycomb group (PcG) multiprotein PRC1-like complex, a complex class required to maintain the transcriptionally repressive state of many genes, including Hox genes, throughout development. PcG PRC1 complex acts via chromatin remodeling and modification of histones; it mediates monoubiquitination of histone H2A 'Lys-119', rendering chromatin heritably changed in its expressibility. Within the PRC1-like complex, regulates RNF2 ubiquitin ligase activity. Regulates the expression of DPPA4 and NANOG in the NT2 embryonic carcinoma cells. The chain is Polycomb group RING finger protein 1 (PCGF1) from Homo sapiens (Human).